The following is a 431-amino-acid chain: Growth-regulating factor 9 (431 aa).

The region spanning 24-59 is the QLQ domain; that stretch reads WMKAAQLMEFRMQALVYRYIEAGLRVPHHLVVPIWN. WRC domains are found at residues 89–133 and 307–351; these read ETEP…LVES and DNEP…VDTT. Short sequence motifs (bipartite nuclear localization signal) lie at residues 94–104, 122–129, 312–322, and 340–345; these read RCRRTDGKKWR, RGRKRSRK, and RGMKKK.

Belongs to the GRF family. As to quaternary structure, interacts with GIF1. Detected in the shoot apical meristem (SAM) and in young leaf primordium.

Its subcellular location is the nucleus. In terms of biological role, transcription activator that plays a role in the regulation of cell expansion in leaf and cotyledons tissues. Component of a network formed by miR396, the GRFs and their interacting factors (GIFs) acting in the regulation of meristem function, at least partially through the control of cell proliferation. This Arabidopsis thaliana (Mouse-ear cress) protein is Growth-regulating factor 9 (GRF9).